Here is a 75-residue protein sequence, read N- to C-terminus: Large ribosomal subunit protein uL29 (75 aa).

The protein belongs to the universal ribosomal protein uL29 family.

The sequence is that of Large ribosomal subunit protein uL29 from Nostoc punctiforme (strain ATCC 29133 / PCC 73102).